Here is a 217-residue protein sequence, read N- to C-terminus: UPF0323 lipoprotein HPSH_01205 (217 aa).

The signal sequence occupies residues methionine 1 to glycine 27. Residue cysteine 28 is the site of N-palmitoyl cysteine attachment. A lipid anchor (S-diacylglycerol cysteine) is attached at cysteine 28. The span at glutamine 160–arginine 171 shows a compositional bias: polar residues. A disordered region spans residues glutamine 160 to serine 217. Residues serine 172–serine 210 show a composition bias toward low complexity.

Belongs to the UPF0323 family.

It localises to the cell membrane. The sequence is that of UPF0323 lipoprotein HPSH_01205 from Helicobacter pylori (strain Shi470).